A 106-amino-acid chain; its full sequence is PTS system N,N'-diacetylchitobiose-specific EIIB component (106 aa).

A PTS EIIB type-3 domain is found at 3-106 (KKHIYLFCSA…VAAIKKAAAN (104 aa)). The Phosphocysteine intermediate role is filled by Cys-10. Phosphocysteine; by EIIA is present on Cys-10.

Forms a complex with ChbA (EIIA). ChbB is a monomer in both its unphosphorylated and phosphorylated forms.

The protein resides in the cytoplasm. It catalyses the reaction N,N'-diacetylchitobiose(out) + N(pros)-phospho-L-histidyl-[protein] = diacetylchitobiose-6'-phosphate(in) + L-histidyl-[protein]. The phosphoenolpyruvate-dependent sugar phosphotransferase system (sugar PTS), a major carbohydrate active transport system, catalyzes the phosphorylation of incoming sugar substrates concomitantly with their translocation across the cell membrane. The enzyme II ChbABC PTS system is involved in the transport of the chitin disaccharide N,N'-diacetylchitobiose (GlcNAc2). This Escherichia coli O157:H7 protein is PTS system N,N'-diacetylchitobiose-specific EIIB component (chbB).